The primary structure comprises 173 residues: Peptide methionine sulfoxide reductase MsrA (173 aa).

Cysteine 10 is a catalytic residue.

This sequence belongs to the MsrA Met sulfoxide reductase family.

The enzyme catalyses L-methionyl-[protein] + [thioredoxin]-disulfide + H2O = L-methionyl-(S)-S-oxide-[protein] + [thioredoxin]-dithiol. The catalysed reaction is [thioredoxin]-disulfide + L-methionine + H2O = L-methionine (S)-S-oxide + [thioredoxin]-dithiol. Its function is as follows. Has an important function as a repair enzyme for proteins that have been inactivated by oxidation. Catalyzes the reversible oxidation-reduction of methionine sulfoxide in proteins to methionine. The sequence is that of Peptide methionine sulfoxide reductase MsrA from Nautilia profundicola (strain ATCC BAA-1463 / DSM 18972 / AmH).